Consider the following 258-residue polypeptide: UPF0246 protein Pnec_1068 (258 aa).

This sequence belongs to the UPF0246 family.

The sequence is that of UPF0246 protein Pnec_1068 from Polynucleobacter necessarius subsp. necessarius (strain STIR1).